Here is a 552-residue protein sequence, read N- to C-terminus: Dihydroxy-acid dehydratase (552 aa).

Aspartate 78 provides a ligand contact to Mg(2+). Cysteine 119 serves as a coordination point for [2Fe-2S] cluster. Positions 120 and 121 each coordinate Mg(2+). Lysine 121 is modified (N6-carboxylysine). Cysteine 191 is a [2Fe-2S] cluster binding site. Glutamate 442 contributes to the Mg(2+) binding site. The active-site Proton acceptor is serine 468.

This sequence belongs to the IlvD/Edd family. In terms of assembly, homodimer. [2Fe-2S] cluster serves as cofactor. Mg(2+) is required as a cofactor.

The enzyme catalyses (2R)-2,3-dihydroxy-3-methylbutanoate = 3-methyl-2-oxobutanoate + H2O. It carries out the reaction (2R,3R)-2,3-dihydroxy-3-methylpentanoate = (S)-3-methyl-2-oxopentanoate + H2O. The protein operates within amino-acid biosynthesis; L-isoleucine biosynthesis; L-isoleucine from 2-oxobutanoate: step 3/4. It participates in amino-acid biosynthesis; L-valine biosynthesis; L-valine from pyruvate: step 3/4. Functionally, functions in the biosynthesis of branched-chain amino acids. Catalyzes the dehydration of (2R,3R)-2,3-dihydroxy-3-methylpentanoate (2,3-dihydroxy-3-methylvalerate) into 2-oxo-3-methylpentanoate (2-oxo-3-methylvalerate) and of (2R)-2,3-dihydroxy-3-methylbutanoate (2,3-dihydroxyisovalerate) into 2-oxo-3-methylbutanoate (2-oxoisovalerate), the penultimate precursor to L-isoleucine and L-valine, respectively. The sequence is that of Dihydroxy-acid dehydratase from Caldicellulosiruptor bescii (strain ATCC BAA-1888 / DSM 6725 / KCTC 15123 / Z-1320) (Anaerocellum thermophilum).